Here is a 359-residue protein sequence, read N- to C-terminus: Probable dual-specificity RNA methyltransferase RlmN (359 aa).

Glutamate 99 acts as the Proton acceptor in catalysis. The region spanning 105 to 342 (TENRRTACVS…VTIRKSYGTT (238 aa)) is the Radical SAM core domain. A disulfide bridge connects residues cysteine 112 and cysteine 347. Residues cysteine 119, cysteine 123, and cysteine 126 each contribute to the [4Fe-4S] cluster site. S-adenosyl-L-methionine is bound by residues 171–172 (GE), serine 204, 227–229 (SLH), and asparagine 304. Cysteine 347 serves as the catalytic S-methylcysteine intermediate.

The protein belongs to the radical SAM superfamily. RlmN family. It depends on [4Fe-4S] cluster as a cofactor.

It localises to the cytoplasm. The enzyme catalyses adenosine(2503) in 23S rRNA + 2 reduced [2Fe-2S]-[ferredoxin] + 2 S-adenosyl-L-methionine = 2-methyladenosine(2503) in 23S rRNA + 5'-deoxyadenosine + L-methionine + 2 oxidized [2Fe-2S]-[ferredoxin] + S-adenosyl-L-homocysteine. The catalysed reaction is adenosine(37) in tRNA + 2 reduced [2Fe-2S]-[ferredoxin] + 2 S-adenosyl-L-methionine = 2-methyladenosine(37) in tRNA + 5'-deoxyadenosine + L-methionine + 2 oxidized [2Fe-2S]-[ferredoxin] + S-adenosyl-L-homocysteine. Specifically methylates position 2 of adenine 2503 in 23S rRNA and position 2 of adenine 37 in tRNAs. This Pelodictyon phaeoclathratiforme (strain DSM 5477 / BU-1) protein is Probable dual-specificity RNA methyltransferase RlmN.